The sequence spans 474 residues: Mercuric reductase (474 aa).

Residues A19, G39, and T44 each coordinate FAD. C45 and C50 are joined by a disulfide. Residues K54, A119, D315, and V323 each coordinate FAD. Positions 471 and 472 each coordinate Hg(2+).

It belongs to the class-I pyridine nucleotide-disulfide oxidoreductase family. In terms of assembly, homodimer. The cofactor is FAD.

It carries out the reaction Hg + NADP(+) + H(+) = Hg(2+) + NADPH. Resistance to Hg(2+) in bacteria appears to be governed by a specialized system which includes mercuric reductase. MerA protein is responsible for volatilizing mercury as Hg(0). The chain is Mercuric reductase (merA) from Streptomyces lividans.